Consider the following 207-residue polypeptide: Superoxide dismutase [Mn] (207 aa).

His28, His76, Asp160, and His164 together coordinate Mn(2+).

It belongs to the iron/manganese superoxide dismutase family. Mn(2+) is required as a cofactor.

The enzyme catalyses 2 superoxide + 2 H(+) = H2O2 + O2. In terms of biological role, destroys superoxide anion radicals which are normally produced within the cells and which are toxic to biological systems. In Mycolicibacterium fortuitum (Mycobacterium fortuitum), this protein is Superoxide dismutase [Mn] (sodA).